Consider the following 634-residue polypeptide: Ras and EF-hand domain-containing protein homolog (634 aa).

2 EF-hand domains span residues 5–33 (DVENLFSLCDSESKGFLTMEDLKKVCPQL) and 33–68 (LDDNDLRFIFNELDRDGSGKIEKMEFLQGFQETVQH). Ca(2+) contacts are provided by D46, D48, S50, K52, and E57. A coiled-coil region spans residues 169 to 310 (LSEKKHENER…RADFDQKQDE (142 aa)). Disordered regions lie at residues 216–237 (ERERLTKEKEEMRERMSEEMSE) and 308–328 (QDELSARRDQASHATEESESV). GTP contacts are provided by residues 449–454 (AVGKSS), 552–555 (NKVD), and 585–586 (AL). Positions 632-634 (RGS) are cleaved as a propeptide — removed in mature form.

The protein belongs to the small GTPase superfamily. Rab family. As to quaternary structure, homodimer.

It localises to the cytoplasm. Its subcellular location is the perinuclear region. In terms of biological role, binds GTP and GDP. Plays a role in uterine seam cell development. In Caenorhabditis briggsae, this protein is Ras and EF-hand domain-containing protein homolog.